The primary structure comprises 205 residues: Cytochrome c biogenesis ATP-binding export protein CcmA (205 aa).

Residues 2 to 204 enclose the ABC transporter domain; sequence LEVSNLTAIR…SPKLRKIKLG (203 aa). ATP is bound at residue 34–41; sequence GRNGTGKT.

This sequence belongs to the ABC transporter superfamily. CcmA exporter (TC 3.A.1.107) family. As to quaternary structure, the complex is composed of two ATP-binding proteins (CcmA) and two transmembrane proteins (CcmB).

It is found in the cell inner membrane. The catalysed reaction is heme b(in) + ATP + H2O = heme b(out) + ADP + phosphate + H(+). Its function is as follows. Part of the ABC transporter complex CcmAB involved in the biogenesis of c-type cytochromes; once thought to export heme, this seems not to be the case, but its exact role is uncertain. Responsible for energy coupling to the transport system. The polypeptide is Cytochrome c biogenesis ATP-binding export protein CcmA (Vibrio vulnificus (strain YJ016)).